Here is a 101-residue protein sequence, read N- to C-terminus: Putative membrane protein insertion efficiency factor (101 aa).

This sequence belongs to the UPF0161 family.

The protein localises to the cell inner membrane. Functionally, could be involved in insertion of integral membrane proteins into the membrane. This is Putative membrane protein insertion efficiency factor from Methylobacterium sp. (strain 4-46).